A 552-amino-acid chain; its full sequence is Protein FAM234A (552 aa).

The span at 1–22 (MLDHKDLEAEIHPLKNEERKSQ) shows a compositional bias: basic and acidic residues. A disordered region spans residues 1–40 (MLDHKDLEAEIHPLKNEERKSQENLGNPSKNEDNVKSAPP). Residues 1-49 (MLDHKDLEAEIHPLKNEERKSQENLGNPSKNEDNVKSAPPQSRLSRCRA) are Cytoplasmic-facing. A Phosphoserine modification is found at Ser-21. A helical; Signal-anchor for type II membrane protein transmembrane segment spans residues 50 to 70 (AAFFLSLFLCLFVVFVVSFVI). At 71–552 (PCPDRPASQR…FSRLRYQSEA (482 aa)) the chain is on the extracellular side. N-linked (GlcNAc...) asparagine glycans are attached at residues Asn-116, Asn-314, Asn-389, and Asn-473.

The protein belongs to the FAM234 family.

The protein localises to the membrane. The chain is Protein FAM234A from Homo sapiens (Human).